The sequence spans 121 residues: Large ribosomal subunit protein bL12 (121 aa).

This sequence belongs to the bacterial ribosomal protein bL12 family. In terms of assembly, homodimer. Part of the ribosomal stalk of the 50S ribosomal subunit. Forms a multimeric L10(L12)X complex, where L10 forms an elongated spine to which 2 to 4 L12 dimers bind in a sequential fashion. Binds GTP-bound translation factors.

Forms part of the ribosomal stalk which helps the ribosome interact with GTP-bound translation factors. Is thus essential for accurate translation. The sequence is that of Large ribosomal subunit protein bL12 from Pectobacterium atrosepticum (strain SCRI 1043 / ATCC BAA-672) (Erwinia carotovora subsp. atroseptica).